Here is a 501-residue protein sequence, read N- to C-terminus: Dipeptide and tripeptide permease A (501 aa).

At 1–21 (MSTANNKPAESVSLNAFKQPR) the chain is on the cytoplasmic side. Residues 22–44 (AFYLIFSIELWERFGYYGLQGIM) traverse the membrane as a helical segment. The Periplasmic portion of the chain corresponds to 45–59 (AVYLVKQLGMSEADS). The chain crosses the membrane as a helical span at residues 60–80 (ITLFSSFSALVYGLVAIGGWL). The Cytoplasmic portion of the chain corresponds to 81–89 (GDKVLGTKR). Residues 90 to 110 (VIMLGAIVLAIGYALVAWSGH) form a helical membrane-spanning segment. A topological domain (periplasmic) is located at residue D111. A helical membrane pass occupies residues 112–132 (AAIVYMGMATIAVGNGLFKAN). Residues 133-153 (PSSLLSTCYDKNDPRLDGAFT) lie on the Cytoplasmic side of the membrane. The chain crosses the membrane as a helical span at residues 154–174 (MYYMSINIGSFFSMLATPWLA). Residues 175-178 (ARFG) are Periplasmic-facing. A helical transmembrane segment spans residues 179 to 199 (WSVAFALSVVGMVITIINFAF). Over 200–218 (CQKWVKQYGSKPDFAPVHM) the chain is Cytoplasmic. Residues 219–239 (GKLLATIAGVVVLVAIATWLL) traverse the membrane as a helical segment. Over 240–246 (HNQGIAR) the chain is Periplasmic. Residues 247 to 267 (MVLGVVALGIVVIFAKETIGL) traverse the membrane as a helical segment. Over 268–274 (KGAARRK) the chain is Cytoplasmic. The helical transmembrane segment at 275–295 (MIVAFLLMVEAIVFFVLYSQM) threads the bilayer. The Periplasmic segment spans residues 296 to 320 (PTSLNFFAIRNVEHSILGIAFEPEQ). Residues 321 to 341 (YQALNPFWIMIGSPILAAIYN) traverse the membrane as a helical segment. The Cytoplasmic portion of the chain corresponds to 342–352 (KMGDRLPMPHK). The helical transmembrane segment at 353–373 (FAIGMVLCSGAFLVLPLGAKF) threads the bilayer. Topologically, residues 374-383 (ASDAGIVSVN) are periplasmic. Residues 384–404 (WLILSYALQSIGELMISGLGL) traverse the membrane as a helical segment. At 405–414 (AMVAQLVPQR) the chain is on the cytoplasmic side. A helical membrane pass occupies residues 415 to 435 (LMGFIMGSWFLTTAGAAIIAG). The Periplasmic portion of the chain corresponds to 436–459 (KIANLMAVPENVTDPLVSLEVYGH). Residues 460 to 480 (VFLQIGIVTAVIAALMLLTAP) form a helical membrane-spanning segment. Over 481–501 (KLNRMTQDDSADLKARETAAA) the chain is Cytoplasmic.

This sequence belongs to the major facilitator superfamily. Proton-dependent oligopeptide transporter (POT/PTR) (TC 2.A.17) family. DtpA subfamily.

Its subcellular location is the cell inner membrane. Its function is as follows. Proton-dependent permease that transports di- and tripeptides. The chain is Dipeptide and tripeptide permease A from Klebsiella pneumoniae (strain 342).